The chain runs to 666 residues: Probable potassium transport system protein Kup (666 aa).

The next 12 membrane-spanning stretches (helical) occupy residues 16 to 36 (GFII…LYTI), 58 to 78 (ISLI…LIAL), 100 to 120 (PWLI…GALT), 141 to 161 (IYQN…VLFG), 165 to 185 (FGTG…FSFL), 221 to 241 (IFIL…YSDL), 253 to 273 (WPFV…WILA), 294 to 314 (VYLV…LISG), 343 to 363 (LYIP…VLAF), 373 to 393 (YGLA…YYLI), 399 to 419 (PILA…FFLA), and 424 to 444 (FMHG…VMFI).

It belongs to the HAK/KUP transporter (TC 2.A.72) family.

Its subcellular location is the cell membrane. It catalyses the reaction K(+)(in) + H(+)(in) = K(+)(out) + H(+)(out). Its function is as follows. Transport of potassium into the cell. Likely operates as a K(+):H(+) symporter. This is Probable potassium transport system protein Kup from Streptococcus pyogenes serotype M1.